Consider the following 25-residue polypeptide: Superoxide dismutase [Mn], mitochondrial (25 aa).

His9 lines the Mn(2+) pocket.

This sequence belongs to the iron/manganese superoxide dismutase family. Homotetramer. It depends on Mn(2+) as a cofactor.

Its subcellular location is the mitochondrion matrix. The catalysed reaction is 2 superoxide + 2 H(+) = H2O2 + O2. Destroys superoxide anion radicals which are normally produced within the cells and which are toxic to biological systems. In Alternaria alternata (Alternaria rot fungus), this protein is Superoxide dismutase [Mn], mitochondrial.